Reading from the N-terminus, the 211-residue chain is Prolactin (211 aa).

The first 24 residues, 1–24 (MTHRRTKLFMMAAVVSYVMTSCGA), serve as a signal peptide directing secretion. 2 disulfide bridges follow: Cys-70–Cys-184 and Cys-201–Cys-211.

It belongs to the somatotropin/prolactin family.

The protein resides in the secreted. The polypeptide is Prolactin (prl) (Paralichthys olivaceus (Bastard halibut)).